A 151-amino-acid chain; its full sequence is Cell division control protein 2 homolog 2 (151 aa).

Residues 1 to 151 form the Protein kinase domain; sequence ALKEIRMDNE…IMQTLQIESL (151 aa). Lysine 3 serves as a coordination point for ATP. The active-site Proton acceptor is aspartate 113.

This sequence belongs to the protein kinase superfamily. CMGC Ser/Thr protein kinase family. CDC2/CDKX subfamily.

The enzyme catalyses L-seryl-[protein] + ATP = O-phospho-L-seryl-[protein] + ADP + H(+). The catalysed reaction is L-threonyl-[protein] + ATP = O-phospho-L-threonyl-[protein] + ADP + H(+). It catalyses the reaction [DNA-directed RNA polymerase] + ATP = phospho-[DNA-directed RNA polymerase] + ADP + H(+). The polypeptide is Cell division control protein 2 homolog 2 (Pisum sativum (Garden pea)).